Reading from the N-terminus, the 187-residue chain is Large ribosomal subunit protein uL10 (187 aa).

It belongs to the universal ribosomal protein uL10 family. As to quaternary structure, part of the ribosomal stalk of the 50S ribosomal subunit. The N-terminus interacts with L11 and the large rRNA to form the base of the stalk. The C-terminus forms an elongated spine to which L12 dimers bind in a sequential fashion forming a multimeric L10(L12)X complex.

Functionally, forms part of the ribosomal stalk, playing a central role in the interaction of the ribosome with GTP-bound translation factors. This chain is Large ribosomal subunit protein uL10, found in Roseiflexus castenholzii (strain DSM 13941 / HLO8).